A 303-amino-acid chain; its full sequence is Cyclin-dependent kinase 4 (303 aa).

Residue Ala2 is modified to N-acetylalanine. Positions 6-295 constitute a Protein kinase domain; that stretch reads YEPVAEIGVG…AFRALQHSYL (290 aa). Residues 12-20 and Lys35 contribute to the ATP site; that span reads IGVGAYGTV. Residues 50-56 form a required for binding D-type cyclins region; that stretch reads PISTVRE. Asp140 serves as the catalytic Proton acceptor. A Phosphothreonine; by CAK modification is found at Thr172.

The protein belongs to the protein kinase superfamily. CMGC Ser/Thr protein kinase family. CDC2/CDKX subfamily. In terms of assembly, component of the D-CDK4 complex, composed of CDK4 and some D-type G1 cyclin (CCND1, CCND2 or CCND3). Interacts directly in the complex with CCND1, CCND2 or CCND3. Interacts with SEI1 and ZNF655. Forms a ternary complex, cyclin D-CDK4-CDKN1B, involved in modulating CDK4 enzymatic activity. Interacts directly with CDKN1B (phosphorylated on 'Tyr-88' and 'Tyr-89'); the interaction allows assembly of the cyclin D-CDK4 complex, Thr-172 phosphorylation, nuclear translocation and enhances the cyclin D-CDK4 complex activity. CDK4 activity is either inhibited or enhanced depending on stoichiometry of complex. The non-tyrosine-phosphorylated form of CDKN1B prevents T-loop phosphorylation of CDK4 producing inactive CDK4. Interacts (unphosphorylated form) with CDK2. Also forms ternary complexes with CDKN1A or CDKN2A. Interacts directly with CDKN1A (via its N-terminal); the interaction promotes the assembly of the cyclin D-CDK4 complex, its nuclear translocation and promotes the cyclin D-dependent enzyme activity of CDK4. Interacts with CCND1; the interaction is prevented with the binding of CCND1 to INSM1 during cell cycle progression. Probably forms a complex composed of chaperones HSP90 and HSP70, co-chaperones CDC37, PPP5C, TSC1 and client protein TSC2, CDK4, AKT, RAF1 and NR3C1; this complex does not contain co-chaperones STIP1/HOP and PTGES3/p23. Interacts with CEBPA (when phosphorylated). Interacts with FNIP1 and FNIP2. In terms of processing, phosphorylation at Thr-172 is required for enzymatic activity. Phosphorylated, in vitro, at this site by CCNH-CDK7, but, in vivo, appears to be phosphorylated by a proline-directed kinase. In the cyclin D-CDK4-CDKN1B complex, this phosphorylation and consequent CDK4 enzyme activity, is dependent on the tyrosine phosphorylation state of CDKN1B. Thus, in proliferating cells, CDK4 within the complex is phosphorylated on Thr-172 in the T-loop. In resting cells, phosphorylation on Thr-172 is prevented by the non-tyrosine-phosphorylated form of CDKN1B.

Its subcellular location is the cytoplasm. It is found in the nucleus. The protein localises to the nucleus membrane. The catalysed reaction is L-seryl-[protein] + ATP = O-phospho-L-seryl-[protein] + ADP + H(+). The enzyme catalyses L-threonyl-[protein] + ATP = O-phospho-L-threonyl-[protein] + ADP + H(+). Its activity is regulated as follows. Both phosphorylation at Thr-172 and binding of a D-type cyclin are necessary for enzymatic activity. Full activation of the cyclin-D-CDK4 complex appears to require other factors such as recruitment of the substrate via a substrate recruitment motif, and/or formation of the CDKN1B ternary complex. Inhibited by INK4 family members. In resting cells, the non-tyrosine-phosphorylated form of CDKN1B prevents phosphorylation at Thr-172 and inactivation, while, in proliferating cells, tyrosine phosphorylation of CDKN1B allows phosphorylation of Thr-172 of CDK4 and subsequent activation. In terms of biological role, ser/Thr-kinase component of cyclin D-CDK4 (DC) complexes that phosphorylate and inhibit members of the retinoblastoma (RB) protein family including RB1 and regulate the cell-cycle during G(1)/S transition. Phosphorylation of RB1 allows dissociation of the transcription factor E2F from the RB/E2F complexes and the subsequent transcription of E2F target genes which are responsible for the progression through the G(1) phase. Hypophosphorylates RB1 in early G(1) phase. Cyclin D-CDK4 complexes are major integrators of various mitogenenic and antimitogenic signals. Also phosphorylates SMAD3 in a cell-cycle-dependent manner and represses its transcriptional activity. Component of the ternary complex, cyclin D/CDK4/CDKN1B, required for nuclear translocation and activity of the cyclin D-CDK4 complex. This is Cyclin-dependent kinase 4 (CDK4) from Bos taurus (Bovine).